Reading from the N-terminus, the 358-residue chain is Phosphoribosylformylglycinamidine cyclo-ligase (358 aa).

The protein belongs to the AIR synthase family.

The protein localises to the cytoplasm. It catalyses the reaction 2-formamido-N(1)-(5-O-phospho-beta-D-ribosyl)acetamidine + ATP = 5-amino-1-(5-phospho-beta-D-ribosyl)imidazole + ADP + phosphate + H(+). It functions in the pathway purine metabolism; IMP biosynthesis via de novo pathway; 5-amino-1-(5-phospho-D-ribosyl)imidazole from N(2)-formyl-N(1)-(5-phospho-D-ribosyl)glycinamide: step 2/2. This is Phosphoribosylformylglycinamidine cyclo-ligase from Chromohalobacter salexigens (strain ATCC BAA-138 / DSM 3043 / CIP 106854 / NCIMB 13768 / 1H11).